Reading from the N-terminus, the 367-residue chain is Polygalacturonase (367 aa).

Positions methionine 1–alanine 18 are cleaved as a signal peptide. Cysteine 34 and cysteine 49 are joined by a disulfide. PbH1 repeat units follow at residues alanine 161 to serine 191, serine 192 to serine 213, glycine 214 to serine 234, valine 243 to threonine 264, and valine 272 to glutamine 294. The Proton donor role is filled by aspartate 206. Cysteine 208 and cysteine 224 form a disulfide bridge. Histidine 228 is a catalytic residue. N-linked (GlcNAc...) asparagine glycans are attached at residues asparagine 318 and asparagine 336. 2 cysteine pairs are disulfide-bonded: cysteine 334-cysteine 339 and cysteine 358-cysteine 367.

Belongs to the glycosyl hydrolase 28 family.

The protein localises to the secreted. The catalysed reaction is (1,4-alpha-D-galacturonosyl)n+m + H2O = (1,4-alpha-D-galacturonosyl)n + (1,4-alpha-D-galacturonosyl)m.. The sequence is that of Polygalacturonase (PG1) from Penicillium digitatum (Green mold).